The following is a 301-amino-acid chain: Probable splicing factor ECU05_1440 (301 aa).

An RRM 1 domain is found at 1 to 70 (MQIFIGKIPN…APISVERANG (70 aa)). Disordered stretches follow at residues 106-140 (PPMR…SFRM) and 255-301 (SKDE…AEND). 2 stretches are compositionally biased toward basic and acidic residues: residues 110–140 (YESR…SFRM) and 255–270 (SKDE…HMRS). Residues 182–255 (LKVVFENIAP…HILKTRSYLS (74 aa)) enclose the RRM 2 domain.

This sequence belongs to the splicing factor SR family.

The protein localises to the nucleus. Its function is as follows. Plays a role in splicing. The chain is Probable splicing factor ECU05_1440 from Encephalitozoon cuniculi (strain GB-M1) (Microsporidian parasite).